Here is a 995-residue protein sequence, read N- to C-terminus: Bifunctional glutamine synthetase adenylyltransferase/adenylyl-removing enzyme (995 aa).

The tract at residues 1 to 487 (MNVTKPATQR…LHAKLFYQPL (487 aa)) is adenylyl removase. The segment at 492–995 (APAGLEIAGR…KAVVRKVFGS (504 aa)) is adenylyl transferase.

This sequence belongs to the GlnE family. The cofactor is Mg(2+).

It catalyses the reaction [glutamine synthetase]-O(4)-(5'-adenylyl)-L-tyrosine + phosphate = [glutamine synthetase]-L-tyrosine + ADP. The catalysed reaction is [glutamine synthetase]-L-tyrosine + ATP = [glutamine synthetase]-O(4)-(5'-adenylyl)-L-tyrosine + diphosphate. Functionally, involved in the regulation of glutamine synthetase GlnA, a key enzyme in the process to assimilate ammonia. When cellular nitrogen levels are high, the C-terminal adenylyl transferase (AT) inactivates GlnA by covalent transfer of an adenylyl group from ATP to specific tyrosine residue of GlnA, thus reducing its activity. Conversely, when nitrogen levels are low, the N-terminal adenylyl removase (AR) activates GlnA by removing the adenylyl group by phosphorolysis, increasing its activity. The regulatory region of GlnE binds the signal transduction protein PII (GlnB) which indicates the nitrogen status of the cell. In Mycobacterium marinum (strain ATCC BAA-535 / M), this protein is Bifunctional glutamine synthetase adenylyltransferase/adenylyl-removing enzyme.